The primary structure comprises 102 residues: MQSQKIRIRLKAYDHKLLDLSVNEIVDTAKRTGARVAGPIPLPTIINKYCVLRGPHVDKKSREQFEMRTHKRLLDIVEPTQQTVDALMKLDLSAGVDVEIKL.

It belongs to the universal ribosomal protein uS10 family. As to quaternary structure, part of the 30S ribosomal subunit.

Its function is as follows. Involved in the binding of tRNA to the ribosomes. This is Small ribosomal subunit protein uS10 from Syntrophotalea carbinolica (strain DSM 2380 / NBRC 103641 / GraBd1) (Pelobacter carbinolicus).